The following is a 449-amino-acid chain: Glucose-6-phosphate isomerase (449 aa).

E291 functions as the Proton donor in the catalytic mechanism. Active-site residues include H312 and K426.

The protein belongs to the GPI family.

It localises to the cytoplasm. It catalyses the reaction alpha-D-glucose 6-phosphate = beta-D-fructose 6-phosphate. The protein operates within carbohydrate biosynthesis; gluconeogenesis. It functions in the pathway carbohydrate degradation; glycolysis; D-glyceraldehyde 3-phosphate and glycerone phosphate from D-glucose: step 2/4. In terms of biological role, catalyzes the reversible isomerization of glucose-6-phosphate to fructose-6-phosphate. This chain is Glucose-6-phosphate isomerase, found in Streptococcus pneumoniae serotype 4 (strain ATCC BAA-334 / TIGR4).